The chain runs to 342 residues: Polyprenyl transferase trt2 (342 aa).

The next 9 helical transmembrane spans lie at 71–91, 95–115, 141–161, 163–183, 187–207, 216–236, 261–278, 282–304, and 319–339; these read VVGVAYTAAIAPVSLPATVLL, IILSLWGFLIRSGGCAWNDLI, AALLTAIIFGCGGLLLLLLPS, CTVEAGIILFFALLYPFGKRF, PQLILVNIAWAIPMAMSSLEV, TLSMCIFIASVIVMIDVVYAC, LAYGFFFSGAISLLLGGV, LGLPFIVFSVGGHIFGFLRFLSV, and AKSSCLLATVFWVLGFFLEYL.

This sequence belongs to the UbiA prenyltransferase family. Mg(2+) serves as cofactor.

It is found in the membrane. It catalyses the reaction 3,5-dimethylorsellinate + (2E,6E)-farnesyl diphosphate = (3R)-3-farnesyl-6-hydroxy-2,3,5-trimethyl-4-oxocyclohexa-1,5-diene-1-carboxylate + diphosphate + H(+). Its pathway is secondary metabolite biosynthesis; terpenoid biosynthesis. Polyprenyl transferase; part of the gene cluster that mediates the biosynthesis of terretonin, a fungal meroterpenoid that acts as a mycotoxin. The first step of the pathway is the synthesis of 3,5-dimethylorsellinic acid (DMOA) by the polyketide synthase trt4. DMOA is then prenylated into farnesyl-DMOA by the polyprenyl transferase trt2. Methylation by the methyltransferase trt5 then leads to farnesyl-DMOA methyl ester which is further subject to epoxidation by the FAD-dependent monooxygenase trt8 to yield epoxyfarnesyl-DMOA methyl ester. Cyclization of epoxyfarnesyl-DMOA methyl ester by the terpene cyclase trt1 leads to a tetracycle intermediate which is in turn converted to preterretonin. Dehydrogenase trt9 comes next to transform preterretonin to preterrenoid. The FAD-dependent monooxygenase trt3 is then required for the C-hydroxylation at C16 of preterrenoid to yield terrenoid. The cytochrome P450 trt6 catalyzes three successive oxidations to transform terrenoid into an unstable intermediate, which then undergoes the D-ring expansion and unusual rearrangement of the methoxy group to afford the core skeleton of terretonin. Trt14 catalyzes the D-ring expansion of terretonin involving intramolecular methoxy rearrangement as well as the hydrolysis of the expanded D-ring and the methyl ester moiety. Finally, the nonheme iron-dependent dioxygenase trt7 accomplishes the last two oxidation reactions steps to complete the biosynthesis of terretonin. Terretonin C is produced via spontaneous decarboxylation of the terretonin precursor. Another shunt product of the terretonin biosynthesis is dihydrofarnesyl-DMOA, derived from epoxyfarnesyl-DMOA through hydrolysis of the epoxide. This is Polyprenyl transferase trt2 from Aspergillus terreus (strain NIH 2624 / FGSC A1156).